A 209-amino-acid polypeptide reads, in one-letter code: Large ribosomal subunit protein uL3 (209 aa).

The segment at 126–148 (HGQSRGPMAHGSRYHRRPGSMGP) is disordered.

This sequence belongs to the universal ribosomal protein uL3 family. As to quaternary structure, part of the 50S ribosomal subunit. Forms a cluster with proteins L14 and L19.

One of the primary rRNA binding proteins, it binds directly near the 3'-end of the 23S rRNA, where it nucleates assembly of the 50S subunit. The protein is Large ribosomal subunit protein uL3 of Listeria monocytogenes serotype 4b (strain CLIP80459).